Consider the following 99-residue polypeptide: Prostate and testis expressed protein 14 (99 aa).

The signal sequence occupies residues 1 to 21 (MGKNILLLLLGLSFVIGFLQA). Residues 22 to 99 (LRCLECDMLN…CHDQSLCNEF (78 aa)) enclose the UPAR/Ly6 domain. 5 disulfide bridges follow: Cys-24–Cys-51, Cys-27–Cys-36, Cys-43–Cys-69, Cys-73–Cys-89, and Cys-90–Cys-96. A glycan (N-linked (GlcNAc...) asparagine) is linked at Asn-40. 2 N-linked (GlcNAc...) asparagine glycosylation sites follow: Asn-75 and Asn-82.

The protein belongs to the PATE family. In terms of assembly, monomer.

The protein localises to the secreted. The sequence is that of Prostate and testis expressed protein 14 from Rattus norvegicus (Rat).